The following is a 972-amino-acid chain: 116 kDa U5 small nuclear ribonucleoprotein component (972 aa).

The residue at position 1 (Met-1) is an N-acetylmethionine. A disordered region spans residues Met-1 to Gly-54. 2 stretches are compositionally biased toward acidic residues: residues Leu-17–Leu-26 and Asp-34–His-48. Position 19 is a phosphoserine (Ser-19). Lys-64 is covalently cross-linked (Glycyl lysine isopeptide (Lys-Gly) (interchain with G-Cter in SUMO1); alternate). Lys-64 participates in a covalent cross-link: Glycyl lysine isopeptide (Lys-Gly) (interchain with G-Cter in SUMO2); alternate. At Thr-86 the chain carries Phosphothreonine. The tr-type G domain occupies Glu-127–Lys-409. GTP-binding positions include Gly-136–Thr-143, Asp-204–His-208, and Asn-258–Asp-261.

This sequence belongs to the TRAFAC class translation factor GTPase superfamily. Classic translation factor GTPase family. EF-G/EF-2 subfamily. Component of the U5 snRNP and the U4/U6-U5 tri-snRNP complex, a building block of the spliceosome. The U4/U6-U5 tri-snRNP complex is composed of the U4, U6 and U5 snRNAs and at least PRPF3, PRPF4, PRPF6, PRPF8, PRPF31, SNRNP200, TXNL4A, SNRNP40, DDX23, CD2BP2, PPIH, SNU13, EFTUD2, SART1 and USP39. Component of the pre-catalytic, catalytic and post-catalytic spliceosome complexes. Component of the minor spliceosome, which splices U12-type introns. Within this complex, interacts with CRIPT. Interacts with ERBB4 and PRPF8. Interacts with PIH1D1. Interacts with RPAP3 and URI1 in a ZNHIT2-dependent manner. Interacts with NRDE2. Interacts with FAM50A. Interacts with UBL5.

The protein localises to the nucleus. In terms of biological role, required for pre-mRNA splicing as component of the spliceosome, including pre-catalytic, catalytic and post-catalytic spliceosomal complexes. Component of the U5 snRNP and the U4/U6-U5 tri-snRNP complex, a building block of the spliceosome. As a component of the minor spliceosome, involved in the splicing of U12-type introns in pre-mRNAs. This is 116 kDa U5 small nuclear ribonucleoprotein component (EFTUD2) from Homo sapiens (Human).